We begin with the raw amino-acid sequence, 257 residues long: Type III pantothenate kinase (257 aa).

6–13 (DVGNTNTV) is an ATP binding site. Substrate is bound by residues tyrosine 102 and 109-112 (GADR). Aspartate 111 serves as the catalytic Proton acceptor. Residue aspartate 131 participates in K(+) binding. ATP is bound at residue threonine 134. A substrate-binding site is contributed by threonine 186.

The protein belongs to the type III pantothenate kinase family. Homodimer. It depends on NH4(+) as a cofactor. K(+) serves as cofactor.

Its subcellular location is the cytoplasm. The catalysed reaction is (R)-pantothenate + ATP = (R)-4'-phosphopantothenate + ADP + H(+). It participates in cofactor biosynthesis; coenzyme A biosynthesis; CoA from (R)-pantothenate: step 1/5. In terms of biological role, catalyzes the phosphorylation of pantothenate (Pan), the first step in CoA biosynthesis. This Leptospira borgpetersenii serovar Hardjo-bovis (strain JB197) protein is Type III pantothenate kinase.